We begin with the raw amino-acid sequence, 1181 residues long: Integrin alpha-7 (1181 aa).

Residues 1-33 (MAGARSRDPWGASGICYLFGSLLVELLFSRAVA) form the signal peptide. Residues 34-1082 (FNLDVMGALR…MAVVAEGVPW (1049 aa)) lie on the Extracellular side of the membrane. FG-GAP repeat units lie at residues 35–103 (NLDV…ETDC), 110–175 (QGAD…IRDE), 185–238 (EGRP…SADL), 292–349 (DRLP…ASRL), 350–411 (VPEV…HWAG), 412–467 (ISPL…GVVA), and 471–530 (QVLE…IAPR). Residue asparagine 86 is glycosylated (N-linked (GlcNAc...) asparagine). 3 disulfides stabilise this stretch: cysteine 94–cysteine 103, cysteine 140–cysteine 163, and cysteine 184–cysteine 197. The Ca(2+) site is built by aspartate 372, asparagine 374, aspartate 376, aspartate 380, aspartate 434, asparagine 436, aspartate 438, aspartate 442, aspartate 492, aspartate 494, asparagine 496, tyrosine 498, and aspartate 500. 6 cysteine pairs are disulfide-bonded: cysteine 539–cysteine 546, cysteine 552–cysteine 615, cysteine 681–cysteine 687, cysteine 781–cysteine 792, cysteine 939–cysteine 994, and cysteine 1001–cysteine 1006. An N-linked (GlcNAc...) asparagine glycan is attached at asparagine 786. The span at 950 to 961 (VDSRDRRRRELE) shows a compositional bias: basic and acidic residues. Positions 950–978 (VDSRDRRRRELEPPEQQEPGERQEPSMSW) are disordered. Asparagine 989 carries N-linked (GlcNAc...) asparagine glycosylation. 2 N-linked (GlcNAc...) asparagine glycosylation sites follow: asparagine 1025 and asparagine 1045. A helical transmembrane segment spans residues 1083–1103 (WVILLAVLAGLLVLALLVLLL). Residues 1104-1181 (WKMGFFKRAK…PDGHPGPGTA (78 aa)) lie on the Cytoplasmic side of the membrane. The GFFKR motif signature appears at 1107–1111 (GFFKR). Residues 1138–1181 (EKTGTILRNNWGSPRREGPDAHPILAADGHPELGPDGHPGPGTA) are disordered. 3 consecutive repeat copies span residues 1157–1160 (DAHP), 1165–1168 (DGHP), and 1173–1176 (DGHP). The tract at residues 1157–1176 (DAHPILAADGHPELGPDGHP) is 3 X 4 AA repeats of D-X-H-P.

The protein belongs to the integrin alpha chain family. As to quaternary structure, heterodimer of an alpha and a beta subunit. The alpha subunit is composed of a heavy and a light chain linked by a disulfide bond. Alpha-7 associates with beta-1. Interacts with COMP. Interacts (via C-terminus intracellular tail region) with CIB1; the interaction is stabilized/increased in a calcium- and magnesium-dependent manner. ADP-ribosylated on at least two sites of the extracellular domain in skeletal myotubes. In terms of processing, a 70 kDa form is created by proteolytic cleavage. Cleavage is elevated during myogenic differentiation and the cleaved form enhances cell adhesion and spreading on laminin. In terms of tissue distribution, isoforms containing segment A are predominantly expressed in skeletal muscle. Isoforms containing segment B are abundantly expressed in skeletal muscle, moderately in cardiac muscle, small intestine, colon, ovary and prostate and weakly in lung and testes. Isoforms containing segment X2D are expressed at low levels in fetal and adult skeletal muscle and in cardiac muscle, but are not detected in myoblasts and myotubes. In muscle fibers isoforms containing segment A and B are expressed at myotendinous and neuromuscular junctions; isoforms containing segment C are expressed at neuromuscular junctions and at extrasynaptic sites. Isoforms containing segments X1 or X2 or, at low levels, X1X2 are expressed in fetal and adult skeletal muscle (myoblasts and myotubes) and cardiac muscle.

The protein localises to the membrane. Integrin alpha-7/beta-1 is the primary laminin receptor on skeletal myoblasts and adult myofibers. During myogenic differentiation, it may induce changes in the shape and mobility of myoblasts, and facilitate their localization at laminin-rich sites of secondary fiber formation. It is involved in the maintenance of the myofibers cytoarchitecture as well as for their anchorage, viability and functional integrity. Isoform Alpha-7X2B and isoform Alpha-7X1B promote myoblast migration on laminin 1 and laminin 2/4, but isoform Alpha-7X1B is less active on laminin 1 (In vitro). Acts as a Schwann cell receptor for laminin-2. Acts as a receptor of COMP and mediates its effect on vascular smooth muscle cells (VSMCs) maturation. Required to promote contractile phenotype acquisition in differentiated airway smooth muscle (ASM) cells. This chain is Integrin alpha-7 (ITGA7), found in Homo sapiens (Human).